The primary structure comprises 355 residues: Probable nitronate monooxygenase (355 aa).

Residues N71, Q175, G180, G219, and 238–241 (QMGT) contribute to the FMN site.

It belongs to the nitronate monooxygenase family. NMO class I subfamily. The cofactor is FMN.

The catalysed reaction is 3 propionate 3-nitronate + 3 O2 + H2O = 3 3-oxopropanoate + 2 nitrate + nitrite + H2O2 + 3 H(+). Functionally, nitronate monooxygenase that uses molecular oxygen to catalyze the oxidative denitrification of alkyl nitronates. Acts on propionate 3-nitronate (P3N), the presumed physiological substrate. Probably functions in the detoxification of P3N, a metabolic poison produced by plants and fungi as a defense mechanism. The chain is Probable nitronate monooxygenase from Staphylococcus saprophyticus subsp. saprophyticus (strain ATCC 15305 / DSM 20229 / NCIMB 8711 / NCTC 7292 / S-41).